Reading from the N-terminus, the 704-residue chain is Mannan-binding lectin serine protease 1 (704 aa).

A signal peptide spans 1–24 (MRFLSFWRLLLYHALCLALPEVSA). The region spanning 25–143 (HTVELNEMFG…TGFDAHYMAV (119 aa)) is the CUB 1 domain. Residues 25 to 189 (HTVELNEMFG…HTDNRTCRVE (165 aa)) are homodimerization. The tract at residues 25-189 (HTVELNEMFG…HTDNRTCRVE (165 aa)) is interaction with MBL2. The tract at residues 25 to 283 (HTVELNEMFG…STQTHSVQIL (259 aa)) is interaction with FCN2. The tract at residues 25–305 (HTVELNEMFG…RLSYRAAGNE (281 aa)) is interaction with MBL1. Asparagine 54 is a glycosylation site (N-linked (GlcNAc...) asparagine). Positions 73, 81, 126, 128, 144, 145, and 147 each coordinate Ca(2+). Residues cysteine 78 and cysteine 96 are joined by a disulfide bond. One can recognise an EGF-like; calcium-binding domain in the interval 144–187 (DVDECKEREDEELSCDHYCHNYIGGYYCSCRFGYILHTDNRTCR). Cystine bridges form between cysteine 148/cysteine 162, cysteine 158/cysteine 171, cysteine 173/cysteine 186, and cysteine 190/cysteine 217. Positions 164, 165, and 168 each coordinate Ca(2+). Asparagine 164 bears the (3R)-3-hydroxyasparagine mark. Asparagine 183 carries N-linked (GlcNAc...) asparagine glycosylation. One can recognise a CUB 2 domain in the interval 190–302 (CSGNLFTQRT…RGWRLSYRAA (113 aa)). Residues glutamate 240, aspartate 250, aspartate 287, and serine 289 each coordinate Ca(2+). Cysteine 247 and cysteine 265 form a disulfide bridge. Sushi domains lie at 304 to 369 (NECP…TCKI) and 370 to 439 (VDCG…TCLP). 8 cysteine pairs are disulfide-bonded: cysteine 306–cysteine 354, cysteine 334–cysteine 367, cysteine 372–cysteine 419, cysteine 402–cysteine 437, cysteine 441–cysteine 577, cysteine 480–cysteine 496, cysteine 619–cysteine 636, and cysteine 647–cysteine 677. 2 N-linked (GlcNAc...) asparagine glycosylation sites follow: asparagine 390 and asparagine 412. Residues 454-701 (IFNGRPAQKG…NKDWIQRITG (248 aa)) form the Peptidase S1 domain. Catalysis depends on charge relay system residues histidine 495 and aspartate 557. The active-site Charge relay system is serine 651.

It belongs to the peptidase S1 family. In terms of assembly, homodimer. Interacts with the oligomeric lectins MBL2, FCN2 and FCN3; triggers the lectin pathway of complement through activation of C3. Interacts with SERPING1. Interacts with COLEC11; probably triggers the lectin pathway of complement. In terms of processing, the iron and 2-oxoglutarate dependent 3-hydroxylation of aspartate and asparagine is (R) stereospecific within EGF domains. N-glycosylated. Some N-linked glycan are of the complex-type. Post-translationally, autoproteolytic processing of the proenzyme produces the active enzyme composed on the heavy and the light chain held together by a disulfide bond. Isoform 1 but not isoform 2 is activated through autoproteolytic processing. In terms of tissue distribution, protein of the plasma which is primarily expressed by liver.

The protein localises to the secreted. With respect to regulation, inhibited by SERPING1 and A2M. Its function is as follows. Functions in the lectin pathway of complement, which performs a key role in innate immunity by recognizing pathogens through patterns of sugar moieties and neutralizing them. The lectin pathway is triggered upon binding of mannan-binding lectin (MBL) and ficolins to sugar moieties which leads to activation of the associated proteases MASP1 and MASP2. Functions as an endopeptidase and may activate MASP2 or C2 or directly activate C3 the key component of complement reaction. Isoform 2 may have an inhibitory effect on the activation of the lectin pathway of complement or may cleave IGFBP5. Also plays a role in development. The protein is Mannan-binding lectin serine protease 1 (Masp1) of Mus musculus (Mouse).